The primary structure comprises 112 residues: T cell receptor alpha variable 7 (112 aa).

The signal sequence occupies residues 1–21 (MEKMRRPVLIIFCLCLGWANG). In terms of domain architecture, Ig-like spans 22–112 (ENQVEHSPHF…DSATYFCAVD (91 aa)). A disulfide bridge links Cys44 with Cys109. 2 N-linked (GlcNAc...) asparagine glycosylation sites follow: Asn84 and Asn90.

In terms of assembly, alpha-beta TR is a heterodimer composed of an alpha and beta chain; disulfide-linked. The alpha-beta TR is associated with the transmembrane signaling CD3 coreceptor proteins to form the TR-CD3 (TcR or TCR). The assembly of alpha-beta TR heterodimers with CD3 occurs in the endoplasmic reticulum where a single alpha-beta TR heterodimer associates with one CD3D-CD3E heterodimer, one CD3G-CD3E heterodimer and one CD247 homodimer forming a stable octameric structure. CD3D-CD3E and CD3G-CD3E heterodimers preferentially associate with TR alpha and TR beta chains, respectively. The association of the CD247 homodimer is the last step of TcR assembly in the endoplasmic reticulum and is required for transport to the cell surface.

Its subcellular location is the cell membrane. Its function is as follows. V region of the variable domain of T cell receptor (TR) alpha chain that participates in the antigen recognition. Alpha-beta T cell receptors are antigen specific receptors which are essential to the immune response and are present on the cell surface of T lymphocytes. Recognize peptide-major histocompatibility (MH) (pMH) complexes that are displayed by antigen presenting cells (APC), a prerequisite for efficient T cell adaptive immunity against pathogens. Binding of alpha-beta TR to pMH complex initiates TR-CD3 clustering on the cell surface and intracellular activation of LCK that phosphorylates the ITAM motifs of CD3G, CD3D, CD3E and CD247 enabling the recruitment of ZAP70. In turn ZAP70 phosphorylates LAT, which recruits numerous signaling molecules to form the LAT signalosome. The LAT signalosome propagates signal branching to three major signaling pathways, the calcium, the mitogen-activated protein kinase (MAPK) kinase and the nuclear factor NF-kappa-B (NF-kB) pathways, leading to the mobilization of transcription factors that are critical for gene expression and essential for T cell growth and differentiation. The T cell repertoire is generated in the thymus, by V-(D)-J rearrangement. This repertoire is then shaped by intrathymic selection events to generate a peripheral T cell pool of self-MH restricted, non-autoaggressive T cells. Post-thymic interaction of alpha-beta TR with the pMH complexes shapes TR structural and functional avidity. The chain is T cell receptor alpha variable 7 from Homo sapiens (Human).